A 581-amino-acid chain; its full sequence is Proline--tRNA ligase (581 aa).

This sequence belongs to the class-II aminoacyl-tRNA synthetase family. ProS type 1 subfamily. In terms of assembly, homodimer.

It is found in the cytoplasm. The catalysed reaction is tRNA(Pro) + L-proline + ATP = L-prolyl-tRNA(Pro) + AMP + diphosphate. Functionally, catalyzes the attachment of proline to tRNA(Pro) in a two-step reaction: proline is first activated by ATP to form Pro-AMP and then transferred to the acceptor end of tRNA(Pro). As ProRS can inadvertently accommodate and process non-cognate amino acids such as alanine and cysteine, to avoid such errors it has two additional distinct editing activities against alanine. One activity is designated as 'pretransfer' editing and involves the tRNA(Pro)-independent hydrolysis of activated Ala-AMP. The other activity is designated 'posttransfer' editing and involves deacylation of mischarged Ala-tRNA(Pro). The misacylated Cys-tRNA(Pro) is not edited by ProRS. In Azoarcus sp. (strain BH72), this protein is Proline--tRNA ligase.